We begin with the raw amino-acid sequence, 59 residues long: MLDKQLLDILVCPVCKGTLSVDKGHTELVCDKDKLAFPVRDDIPVMLMEEARKLEADDA.

It belongs to the UPF0434 family.

This chain is UPF0434 protein Mmc1_0910, found in Magnetococcus marinus (strain ATCC BAA-1437 / JCM 17883 / MC-1).